The primary structure comprises 107 residues: Polyketide synthase CurG (107 aa).

It participates in antibiotic biosynthesis; curamycin biosynthesis. The sequence is that of Polyketide synthase CurG (curG) from Streptomyces cyaneus (Streptomyces curacoi).